A 321-amino-acid polypeptide reads, in one-letter code: Low affinity immunoglobulin epsilon Fc receptor (321 aa).

Residues 1-21 lie on the Cytoplasmic side of the membrane; that stretch reads MEEGQYSEIEELPRRRCCRRG. S-palmitoyl cysteine attachment occurs at residues Cys17 and Cys18. A helical; Signal-anchor for type II membrane protein membrane pass occupies residues 22–47; sequence TQIVLLGLVTAALWAGLLTLLLLWHW. Residues 48–321 are Extracellular-facing; that stretch reads DTTQSLKQLE…LPTPSAPLHS (274 aa). An N-linked (GlcNAc...) asparagine glycan is attached at Asn63. Residues 66 to 85 are disordered; the sequence is QVSKNLESHHGDQMAQKSQS. 3 consecutive repeats follow at residues 69–89, 90–110, and 111–131; these read KNLESHHGDQMAQKSQSTQIS, QELEELRAEQQRLKSQDLELS, and WNLNGLQADLSSFKSQELNER. 4 cysteine pairs are disulfide-bonded: Cys160/Cys288, Cys163/Cys174, Cys191/Cys282, and Cys259/Cys273. The 123-residue stretch at 162–284 folds into the C-type lectin domain; the sequence is TCPEKWINFQ…RKLGAWVCDR (123 aa). Residues Glu249, Thr251, Asn269, and Asp270 each contribute to the Ca(2+) site. Residues 290–321 are disordered; it reads PPASEGSAESMGPDSRPDPDGRLPTPSAPLHS. O-linked (Xyl...) (chondroitin sulfate) serine glycosylation occurs at Ser296.

Homotrimer. Interacts (via C-type lectin domain) with IGHE (via CH3 region); this interaction regulates IgE homeostasis. Interacts (via the C-terminus) with CR2/CD21 (via Sushi domain 1 and 2). Post-translationally, N- and O-glycosylated. The secreted form sCD23 is produced by ADAM10-mediated ectodomain shedding. As to expression, detected in urine (at protein level).

The protein resides in the cell membrane. It is found in the secreted. Low-affinity receptor for immunoglobulin E (IgE) and CR2/CD21. Has essential roles in the regulation of IgE production and in the differentiation of B cells. On B cells, initiates IgE-dependent antigen uptake and presentation to T cells. On macrophages, upon IgE binding and antigen cross-linking induces intracellular killing of parasites through activation of L-Arginine-nitric oxide pathway. This Homo sapiens (Human) protein is Low affinity immunoglobulin epsilon Fc receptor (FCER2).